The primary structure comprises 1964 residues: Neurogenic locus notch homolog protein 4 (1964 aa).

An N-terminal signal peptide occupies residues 1–20 (MQPQLLLLLLLPLNFPVILT). EGF-like domains are found at residues 21–60 (RELLCGGSPEPCANGGTCLRLSRGQGICQCAPGFLGETCQ), 61–112 (FPDP…DRCQ), 115–152 (LEELCPPSFCSNGGHCYVQASGRPQCSCEPGWTGEQCQ), and 153–189 (LRDFCSANPCANGGVCLATYPQIQCRCPPGFEGHTCE). At 21 to 1443 (RELLCGGSPE…TRPSANQLPW (1423 aa)) the chain is on the extracellular side. 95 disulfide bridges follow: C25–C38, C32–C48, C50–C59, C65–C77, C71–C100, C102–C111, C119–C130, C124–C140, C142–C151, C157–C168, C162–C177, C179–C188, C195–C208, C202–C217, C219–C228, C235–C246, C240–C259, C261–C270, C277–C288, C282–C297, C299–C308, C315–C329, C323–C338, C340–C349, C356–C367, C361–C376, C378–C387, C393–C404, C398–C415, C417–C426, C433–C449, C443–C458, C460–C469, C476–C487, C481–C496, C498–C507, C514–C525, C519–C534, C536–C545, C552–C563, C557–C572, C574–C583, C590–C601, C595–C610, C612–C621, C626–C637, C631–C646, C648–C655, C662–C669, C664–C674, C676–C685, C692–C703, C697–C712, C714–C723, C730–C741, C735–C750, C752–C761, C768–C779, C773–C788, C790–C799, C807–C818, C812–C827, C829–C838, C845–C856, C850–C865, C867–C876, C882–C903, C897–C912, C914–C923, C930–C941, C935–C950, C952–C961, C968–C979, C973–C988, C990–C999, C1006–C1019, C1011–C1028, C1030–C1039, C1046–C1057, C1051–C1069, C1071–C1080, C1087–C1098, C1092–C1110, C1112–C1121, C1130–C1142, C1136–C1155, C1157–C1166, C1174–C1187, C1183–C1199, C1210–C1234, C1216–C1229, C1225–C1241, C1247–C1273, C1255–C1268, and C1264–C1280. One can recognise an EGF-like 5; calcium-binding domain in the interval 191 to 229 (DINECFLEPGPCPQGTSCHNTLGSYQCLCPVGQEGPQCK). The 41-residue stretch at 231-271 (RKGACPPGSCLNGGTCQLVPEGHSTFHLCLCPPGFTGLDCE) folds into the EGF-like 6 domain. The EGF-like 7; calcium-binding domain maps to 273–309 (NPDDCVRHQCQNGATCLDGLDTYTCLCPKTWKGWDCS). One can recognise an EGF-like 8; calcium-binding domain in the interval 311-350 (DIDECEARGPPRCRNGGTCQNTAGSFHCVCVSGWGGAGCE). The 37-residue stretch at 352 to 388 (NLDDCAAATCAPGSTCIDRVGSFSCLCPPGRTGLLCH) folds into the EGF-like 9; calcium-binding domain. Residues 389–427 (LEDMCLSQPCHVNAQCSTNPLTGSTLCICQPGYSGSTCH) form the EGF-like 10 domain. One can recognise an EGF-like 11; calcium-binding domain in the interval 429-470 (DLDECQMAQQGPSPCEHGGSCINTPGSFNCLCLPGYTGSRCE). Positions 472–508 (DHNECLSQPCHPGSTCLDLLATFHCLCPPGLEGRLCE) constitute an EGF-like 12; calcium-binding domain. Positions 510–546 (EVNECTSNPCLNQAACHDLLNGFQCLCLPGFTGARCE) constitute an EGF-like 13; calcium-binding domain. The region spanning 548–584 (DMDECSSTPCANGGRCRDQPGAFYCECLPGFEGPHCE) is the EGF-like 14; calcium-binding domain. One can recognise an EGF-like 15; calcium-binding domain in the interval 586 to 622 (EVDECLSDPCPVGASCLDLPGAFFCLCRPGFTGQLCE). 14 EGF-like domains span residues 623 to 656 (VPLCTPNMCQPGQQCQGQEHRAPCLCPDGSPGCV), 658 to 686 (AEDNCPCHHGHCQRSLCVCDEGWTGPECE), 688 to 724 (ELGGCISTPCAHGGTCHPQPSGYNCTCPAGYMGLTCS), 726 to 762 (EVTACHSGPCLNGGSCSIRPEGYSCTCLPSHTGRHCQ), 764 to 800 (AVDHCVSASCLNGGTCVNKPGTFFCLCATGFQGLHCE), 803 to 839 (TNPSCADSPCRNKATCQDTPRGARCLCSPGYTGSSCQ), 841 to 877 (LIDLCARKPCPHTARCLQSGPSFQCLCLQGWTGALCD), 878 to 924 (FPLS…KLCQ), 926 to 962 (NVNPCEPNPCHHGSTCVPQPSGYVCQCAPGYEGQNCS), 964 to 1000 (VLDACQSQPCHNHGTCTSRPGGFHCACPPGFVGLRCE), 1002 to 1040 (DVDECLDRPCHPSGTAACHSLANAFYCQCLPGHTGQRCE), 1042 to 1081 (EMDLCQSQPCSNGGSCEITTGPPPGFTCHCPKGFEGPTCS), 1083 to 1122 (KALSCGIHHCHNGGLCLPSPKPGSPPLCACLSGFGGPDCL), and 1126 to 1167 (APPG…PRCQ). A glycan (N-linked (GlcNAc...) asparagine) is linked at N711. N960 carries N-linked (GlcNAc...) asparagine glycosylation. N1139 carries an N-linked (GlcNAc...) asparagine glycan. 3 LNR repeats span residues 1166–1209 (CQRP…PWKG), 1210–1241 (CPPHSQCWLLFRDGRCHPQCDSEECLFDGYDC), and 1247–1287 (CIPA…GEDS). Residues 1345 to 1369 (EELSGARDSSSWERQAPPTQPLGKE) are disordered. The helical transmembrane segment at 1444-1464 (PILCSPVVGVLLLALGALLVL) threads the bilayer. Residues 1465-1964 (QLIRRRRREH…PLNSVVRNLN (500 aa)) are Cytoplasmic-facing. The tract at residues 1516 to 1535 (VDEDGVAMCSGPEEGEAEET) is disordered. 5 ANK repeats span residues 1628–1657 (TGETPLHLAARFSRPTAARRLLEAGANPNQ), 1661–1691 (AGRTPLHTAVAADAREVCQLLLASRQTTVDA), 1695–1724 (DGTTPLMLAARLAVEDLVEELIAARADVGA), 1728–1757 (RGKTALHWAAAVNNARAARSLLQAGADKDA), and 1761–1790 (REQTPLFLAAREGAVEVAQLLLELGAARGL). The tract at residues 1879–1907 (RSGSCGGPTTRGRRFSAGSRGRRGARASQ) is disordered.

This sequence belongs to the NOTCH family. As to quaternary structure, heterodimer of a C-terminal fragment N(TM) and a N-terminal fragment N(EC) which are probably linked by disulfide bonds. Interacts with MAML1, MAML2 and MAML3 which act as transcriptional coactivators for NOTCH4. In terms of processing, synthesized in the endoplasmic reticulum as an inactive form which is proteolytically cleaved by a furin-like convertase in the trans-Golgi network before it reaches the plasma membrane to yield an active, ligand-accessible form. Cleavage results in a C-terminal fragment N(TM) and a N-terminal fragment N(EC). Following ligand binding, it is cleaved by TNF-alpha converting enzyme (TACE) to yield a membrane-associated intermediate fragment called notch extracellular truncation (NEXT). This fragment is then cleaved by presenilin dependent gamma-secretase to release a notch-derived peptide containing the intracellular domain (NICD) from the membrane. Post-translationally, phosphorylated. In terms of tissue distribution, highly expressed in lung, moderately in heart kidney, and at lower levels in the ovary and skeletal muscle. A very low expression is seen in the brain, intestine, liver and testis.

It is found in the cell membrane. It localises to the nucleus. Functions as a receptor for membrane-bound ligands Jagged1, Jagged2 and Delta1 to regulate cell-fate determination. Upon ligand activation through the released notch intracellular domain (NICD) it forms a transcriptional activator complex with RBPJ/RBPSUH and activates genes of the enhancer of split locus. Affects the implementation of differentiation, proliferation and apoptotic programs. May regulate branching morphogenesis in the developing vascular system. The protein is Neurogenic locus notch homolog protein 4 of Mus musculus (Mouse).